Here is a 176-residue protein sequence, read N- to C-terminus: MDLPGPIHDFLLVFLGSGIILGGLGVVLLTNPIYSAFSLGFVFICISLFYILSNSYFVAAAQLLIYVGAINVLILFAVMFMNGSEYYKDFHLWTLGDGLTSLICTILFLSLITTILDTSWYGILWTTKSNQIIEKDFISNSQQLGILLSTDFFLPFELMSIILLVALLGAIAAARQ.

Helical transmembrane passes span 10 to 30, 32 to 52, 61 to 81, 92 to 112, and 152 to 172; these read FLLVFLGSGIILGGLGVVLLT, PIYSAFSLGFVFICISLFYIL, AQLLIYVGAINVLILFAVMFM, LWTLGDGLTSLICTILFLSLI, and FFLPFELMSIILLVALLGAIA.

The protein belongs to the complex I subunit 6 family. In terms of assembly, NDH is composed of at least 16 different subunits, 5 of which are encoded in the nucleus.

It is found in the plastid. The protein resides in the chloroplast thylakoid membrane. It carries out the reaction a plastoquinone + NADH + (n+1) H(+)(in) = a plastoquinol + NAD(+) + n H(+)(out). It catalyses the reaction a plastoquinone + NADPH + (n+1) H(+)(in) = a plastoquinol + NADP(+) + n H(+)(out). Functionally, NDH shuttles electrons from NAD(P)H:plastoquinone, via FMN and iron-sulfur (Fe-S) centers, to quinones in the photosynthetic chain and possibly in a chloroplast respiratory chain. The immediate electron acceptor for the enzyme in this species is believed to be plastoquinone. Couples the redox reaction to proton translocation, and thus conserves the redox energy in a proton gradient. The polypeptide is NAD(P)H-quinone oxidoreductase subunit 6, chloroplastic (ndhG) (Pelargonium hortorum (Common geranium)).